Here is a 433-residue protein sequence, read N- to C-terminus: Tubulin epsilon and delta complex protein 2 (433 aa).

Disordered regions lie at residues 45–69 (TGTR…ACTP), 95–169 (TKAG…VGMG), and 326–345 (QPPR…SCGG). A compositionally biased stretch (polar residues) spans 107–120 (KSRSIVTSSGTTAS). Ser159 is modified (phosphoserine). Residues 327–339 (PPRPCPVGRPPGA) show a composition bias toward pro residues.

Interacts with TEDC1. Found in a complex with TEDC1, TEDC2, TUBE1 and TUBD1.

Its subcellular location is the cell projection. The protein localises to the cilium. It localises to the cytoplasm. The protein resides in the cytoskeleton. It is found in the microtubule organizing center. Its subcellular location is the centrosome. The protein localises to the centriole. In terms of biological role, acts as a positive regulator of ciliary hedgehog signaling. Required for centriole stability. The chain is Tubulin epsilon and delta complex protein 2 from Homo sapiens (Human).